The sequence spans 260 residues: BTB/POZ domain-containing protein KCTD21 (260 aa).

Residues 3–72 form the BTB domain; it reads DPITLNVGGK…LRTSHLDLPE (70 aa). Positions 88–112 form a coiled coil; it reads QVQPLIEALQEKEVELSKAEKNAML.

In terms of assembly, homopentamer. Interacts with KCTD11; KCTD21 and KCTD11 may associate in pentameric assemblies. Interacts (via BTB domain) with CUL3; indicative for a participation in a BCR (BTB-CUL3-RBX1) E3 ubiquitin-protein ligase complex. Highly expressed in cerebellum and brain. Expression is down-regulated in medulloblastoma.

The protein operates within protein modification; protein ubiquitination. Its function is as follows. Probable substrate-specific adapter of a BCR (BTB-CUL3-RBX1) E3 ubiquitin-protein ligase complex mediating the ubiquitination and subsequent proteasomal degradation of target proteins. Promotes the ubiquitination of HDAC1. Can function as antagonist of the Hedgehog pathway by affecting the nuclear transfer of transcription factor GLI1; the function probably occurs via HDAC1 down-regulation, keeping GLI1 acetylated and inactive. Inhibits cell growth and tumorigenicity of medulloblastoma (MDB). This Homo sapiens (Human) protein is BTB/POZ domain-containing protein KCTD21 (KCTD21).